The chain runs to 366 residues: Putative amino-acid transporter MJ1196 (366 aa).

11 consecutive transmembrane segments (helical) span residues Ile14–Gly34, Ile37–Tyr57, Ile87–Phe107, Phe111–Gly131, Ile141–Ile161, Ile173–Leu193, Gly205–Val225, Phe247–Leu267, Ile291–Ala311, Leu314–Phe334, and Leu346–Leu366.

It belongs to the amino acid-polyamine-organocation (APC) superfamily.

It localises to the cell membrane. In Methanocaldococcus jannaschii (strain ATCC 43067 / DSM 2661 / JAL-1 / JCM 10045 / NBRC 100440) (Methanococcus jannaschii), this protein is Putative amino-acid transporter MJ1196.